Consider the following 133-residue polypeptide: Interleukin-4 (133 aa).

An N-terminal signal peptide occupies residues 1–24 (MGLTSQLIPTLVCLLACTSNFVHG). 3 cysteine pairs are disulfide-bonded: cysteine 27/cysteine 133, cysteine 48/cysteine 85, and cysteine 70/cysteine 105. Asparagine 62 is a glycosylation site (N-linked (GlcNAc...) asparagine).

This sequence belongs to the IL-4/IL-13 family.

The protein localises to the secreted. Participates in at least several B-cell activation processes as well as of other cell types. It is a costimulator of DNA-synthesis. It induces the expression of class II MHC molecules on resting B-cells. It enhances both secretion and cell surface expression of IgE and IgG1. It also regulates the expression of the low affinity Fc receptor for IgE (CD23) on both lymphocytes and monocytes. Positively regulates IL31RA expression in macrophages. Stimulates autophagy in dendritic cells by interfering with mTORC1 signaling and through the induction of RUFY4. This chain is Interleukin-4 (IL4), found in Sus scrofa (Pig).